A 439-amino-acid chain; its full sequence is Homogentisate 1,2-dioxygenase (439 aa).

Catalysis depends on His293, which acts as the Proton acceptor. Fe cation-binding residues include His336 and Glu342. 2 residues coordinate homogentisate: Tyr351 and His372. Position 372 (His372) interacts with Fe cation.

This sequence belongs to the homogentisate dioxygenase family. In terms of assembly, hexamer; dimer of trimers. The cofactor is Fe cation.

The enzyme catalyses homogentisate + O2 = 4-maleylacetoacetate + H(+). It functions in the pathway amino-acid degradation; L-phenylalanine degradation; acetoacetate and fumarate from L-phenylalanine: step 4/6. Involved in the catabolism of homogentisate (2,5-dihydroxyphenylacetate or 2,5-OH-PhAc), a central intermediate in the degradation of phenylalanine and tyrosine. Catalyzes the oxidative ring cleavage of the aromatic ring of homogentisate to yield maleylacetoacetate. This chain is Homogentisate 1,2-dioxygenase, found in Cupriavidus pinatubonensis (strain JMP 134 / LMG 1197) (Cupriavidus necator (strain JMP 134)).